The following is a 171-amino-acid chain: Xanthine-guanine phosphoribosyltransferase (171 aa).

Residues 51 to 52 (RG) and 106 to 114 (DDLVDSGKT) each bind 5-phospho-alpha-D-ribose 1-diphosphate. D107 provides a ligand contact to Mg(2+). Positions 110 and 153 each coordinate guanine. Residues D110 and I153 each contribute to the xanthine site. GMP contacts are provided by residues 110-114 (DSGKT) and 152-153 (WI).

Belongs to the purine/pyrimidine phosphoribosyltransferase family. XGPT subfamily. Homotetramer. The cofactor is Mg(2+).

The protein resides in the cell inner membrane. The catalysed reaction is GMP + diphosphate = guanine + 5-phospho-alpha-D-ribose 1-diphosphate. It catalyses the reaction XMP + diphosphate = xanthine + 5-phospho-alpha-D-ribose 1-diphosphate. It carries out the reaction IMP + diphosphate = hypoxanthine + 5-phospho-alpha-D-ribose 1-diphosphate. The protein operates within purine metabolism; GMP biosynthesis via salvage pathway; GMP from guanine: step 1/1. Its pathway is purine metabolism; XMP biosynthesis via salvage pathway; XMP from xanthine: step 1/1. Functionally, purine salvage pathway enzyme that catalyzes the transfer of the ribosyl-5-phosphate group from 5-phospho-alpha-D-ribose 1-diphosphate (PRPP) to the N9 position of the 6-oxopurines guanine and xanthine to form the corresponding ribonucleotides GMP (guanosine 5'-monophosphate) and XMP (xanthosine 5'-monophosphate), with the release of PPi. To a lesser extent, also acts on hypoxanthine. The polypeptide is Xanthine-guanine phosphoribosyltransferase (Ruegeria pomeroyi (strain ATCC 700808 / DSM 15171 / DSS-3) (Silicibacter pomeroyi)).